The primary structure comprises 382 residues: RNA exonuclease 3 (382 aa).

In terms of domain architecture, Exonuclease spans 223–369 (VLALDCEMAY…EDAIAAMDVV (147 aa)).

It belongs to the REXO1/REXO3 family.

Its subcellular location is the cytoplasm. It localises to the nucleus. In terms of biological role, 3' to 5' exoribonuclease required for proper 3' end maturation of MRP RNA and of the U5L snRNA. The chain is RNA exonuclease 3 (REX3) from Eremothecium gossypii (strain ATCC 10895 / CBS 109.51 / FGSC 9923 / NRRL Y-1056) (Yeast).